We begin with the raw amino-acid sequence, 119 residues long: MANSKRQLFIKRRLRVRNKLRKVNAGRVRLSVHRSNKNISVQLIDDVAGKTLASASTLEKDLGVVGKNNIEAAAKVGAAIAERAKKAGVSEAYFDRGGFLFHGKVKAVAEAAREGGLKI.

Belongs to the universal ribosomal protein uL18 family. As to quaternary structure, part of the 50S ribosomal subunit; part of the 5S rRNA/L5/L18/L25 subcomplex. Contacts the 5S and 23S rRNAs.

Functionally, this is one of the proteins that bind and probably mediate the attachment of the 5S RNA into the large ribosomal subunit, where it forms part of the central protuberance. In Roseobacter denitrificans (strain ATCC 33942 / OCh 114) (Erythrobacter sp. (strain OCh 114)), this protein is Large ribosomal subunit protein uL18.